The chain runs to 150 residues: MLFLKSSRAFSKRLFSSSTVRYRDIQRLTLTGNLTKDVERLQSQKGNEYMRYTVASNNGKDVAPTFHSVYVFDSYNFDRLQTILRKGTRVYVEADAVWRSVPAGNEGSQAKMSLRHVSADVLFYPRNKNGDESGEETHPELDADPMINSF.

Residues 1–22 (MLFLKSSRAFSKRLFSSSTVRY) constitute a mitochondrion transit peptide. An SSB domain is found at 25 to 125 (IQRLTLTGNL…HVSADVLFYP (101 aa)). Residues 127-150 (NKNGDESGEETHPELDADPMINSF) form a disordered region. Positions 128-141 (KNGDESGEETHPEL) are enriched in basic and acidic residues.

It localises to the mitochondrion. Its function is as follows. This protein binds preferentially and cooperatively to ss-DNA. Involved in mitochondrial DNA replication. This Schizosaccharomyces pombe (strain 972 / ATCC 24843) (Fission yeast) protein is Single-stranded DNA-binding protein rim1, mitochondrial (rim1).